A 240-amino-acid polypeptide reads, in one-letter code: UDP-2,3-diacylglucosamine hydrolase (240 aa).

Mn(2+) is bound by residues Asp7, His9, Asp40, Asn78, and His113. Position 78–79 (78–79 (NR)) interacts with substrate. Substrate is bound by residues Asp121, Ser159, Lys166, and His194. Positions 194 and 196 each coordinate Mn(2+).

Belongs to the LpxH family. The cofactor is Mn(2+).

It is found in the cell inner membrane. It carries out the reaction UDP-2-N,3-O-bis[(3R)-3-hydroxytetradecanoyl]-alpha-D-glucosamine + H2O = 2-N,3-O-bis[(3R)-3-hydroxytetradecanoyl]-alpha-D-glucosaminyl 1-phosphate + UMP + 2 H(+). Its pathway is glycolipid biosynthesis; lipid IV(A) biosynthesis; lipid IV(A) from (3R)-3-hydroxytetradecanoyl-[acyl-carrier-protein] and UDP-N-acetyl-alpha-D-glucosamine: step 4/6. Hydrolyzes the pyrophosphate bond of UDP-2,3-diacylglucosamine to yield 2,3-diacylglucosamine 1-phosphate (lipid X) and UMP by catalyzing the attack of water at the alpha-P atom. Involved in the biosynthesis of lipid A, a phosphorylated glycolipid that anchors the lipopolysaccharide to the outer membrane of the cell. The protein is UDP-2,3-diacylglucosamine hydrolase of Pseudomonas putida (strain ATCC 47054 / DSM 6125 / CFBP 8728 / NCIMB 11950 / KT2440).